The sequence spans 570 residues: Probable electron transfer flavoprotein-ubiquinone oxidoreductase (570 aa).

FAD is bound at residue 13-27 (VVIVGAGPAGLSAAI). [4Fe-4S] cluster contacts are provided by Cys515, Cys539, Cys542, and Cys545. Positions 530–559 (KRFQINAANCVHCKTCDIKDPSQNITWVTP) constitute a 4Fe-4S ferredoxin-type domain.

The cofactor is [4Fe-4S] cluster. Requires FAD as cofactor.

The catalysed reaction is a ubiquinone + reduced [electron-transfer flavoprotein] = a ubiquinol + oxidized [electron-transfer flavoprotein] + H(+). Its function is as follows. Accepts electrons from ETF and reduces ubiquinone. The chain is Probable electron transfer flavoprotein-ubiquinone oxidoreductase (etfD) from Acinetobacter baylyi (strain ATCC 33305 / BD413 / ADP1).